The following is a 287-amino-acid chain: Deoxyuridine 5'-triphosphate nucleotidohydrolase (287 aa).

173-175 lines the substrate pocket; it reads RSG. Positions 264-275 are enriched in low complexity; it reads SSSKDTSDSQMS. Residues 264 to 287 form a disordered region; the sequence is SSSKDTSDSQMSRGDAGLGSSGLM.

It belongs to the dUTPase family. It depends on Mg(2+) as a cofactor.

The catalysed reaction is dUTP + H2O = dUMP + diphosphate + H(+). Its function is as follows. Involved in nucleotide metabolism: produces dUMP, the immediate precursor of thymidine nucleotides and decreases the intracellular concentration of dUTP to avoid uracil incorporation into viral DNA. This is Deoxyuridine 5'-triphosphate nucleotidohydrolase from Saimiriine herpesvirus 2 (strain 11) (SaHV-2).